The sequence spans 501 residues: MAINAQEISALIKKQIENFQPNFDVTETGVVTYIGDGIARARGLDNAMSGELLEFSNGTFGMAQNLESNDVGIIILGDFSTIREGDEVKRTGKIMEVPVGEALIGRVVNPLGQPVDGLGDIETTGFRPVETPAPGVMQRKSVFEPLQTGLKAIDALVPIGRGQRELIIGDRQTGKTSVAIDAILNQKGQDMICIYVAIGQKESTVRTQVETLRRYGALDYTIVVTASASQPSPLLFIAPYAGVAMAEEFMYNGKHVLIVYDDLSKQAVAYRELSLLLRRPPGREAYPGDVFYLHSRLLERSAKVSDDLGGGSITALPFIETQAGDISAYIATNVISITDGQIFLQEDLFNSGIRPAIDAGSSVSRVGGSAQIKAMKRVAGTLRLDLASYRELEAFTQFGSDLDAATQAKLNRGRRTVEILKQPLHKPLPVEKQVVILYALTHGFLDDVPVDDILAFEEALYDYFDAHYDHLFETIRTTKDLPQEAELDAAIQAFKAQSNFK.

169–176 serves as a coordination point for ATP; that stretch reads GDRQTGKT.

The protein belongs to the ATPase alpha/beta chains family. In terms of assembly, F-type ATPases have 2 components, CF(1) - the catalytic core - and CF(0) - the membrane proton channel. CF(1) has five subunits: alpha(3), beta(3), gamma(1), delta(1), epsilon(1). CF(0) has three main subunits: a(1), b(2) and c(9-12). The alpha and beta chains form an alternating ring which encloses part of the gamma chain. CF(1) is attached to CF(0) by a central stalk formed by the gamma and epsilon chains, while a peripheral stalk is formed by the delta and b chains.

It is found in the cell membrane. The enzyme catalyses ATP + H2O + 4 H(+)(in) = ADP + phosphate + 5 H(+)(out). Functionally, produces ATP from ADP in the presence of a proton gradient across the membrane. The alpha chain is a regulatory subunit. In Streptococcus equi subsp. zooepidemicus (strain H70), this protein is ATP synthase subunit alpha.